A 253-amino-acid polypeptide reads, in one-letter code: Chorismate mutase 2, cytosolic (253 aa).

The Chorismate mutase domain maps to 2 to 253 (DAAGGDQLSL…EVEYLLRRLD (252 aa)).

As to quaternary structure, homodimer. Interacts with Cmu1 of the fungal pathogen Ustilago maydis.

Its subcellular location is the cytoplasm. The protein localises to the cytosol. The catalysed reaction is chorismate = prephenate. The protein operates within metabolic intermediate biosynthesis; prephenate biosynthesis; prephenate from chorismate: step 1/1. No allosteric regulation. The chain is Chorismate mutase 2, cytosolic from Zea mays (Maize).